Here is a 1734-residue protein sequence, read N- to C-terminus: Protein TIC 214 (1734 aa).

6 helical membrane-spanning segments follow: residues 19-39 (IINS…FSIG), 68-88 (FIAG…HLAL), 91-111 (PHTI…WNNH), 133-153 (VFLN…SSML), 176-196 (VGWL…LVWI), and 227-247 (IFSI…PSPI). Positions 1433–1485 (NLNNEEKELADEVELESDNEKQINPESALSNQEKTIQEIYAESKKKKRQNKKQ) form a coiled coil.

This sequence belongs to the TIC214 family. In terms of assembly, part of the Tic complex.

It localises to the plastid. The protein resides in the chloroplast inner membrane. Its function is as follows. Involved in protein precursor import into chloroplasts. May be part of an intermediate translocation complex acting as a protein-conducting channel at the inner envelope. The sequence is that of Protein TIC 214 from Lepidium virginicum (Virginia pepperweed).